We begin with the raw amino-acid sequence, 345 residues long: N-acetyl-gamma-glutamyl-phosphate reductase (345 aa).

Cys153 is an active-site residue.

Belongs to the NAGSA dehydrogenase family. Type 1 subfamily.

Its subcellular location is the cytoplasm. It catalyses the reaction N-acetyl-L-glutamate 5-semialdehyde + phosphate + NADP(+) = N-acetyl-L-glutamyl 5-phosphate + NADPH + H(+). It functions in the pathway amino-acid biosynthesis; L-arginine biosynthesis; N(2)-acetyl-L-ornithine from L-glutamate: step 3/4. Functionally, catalyzes the NADPH-dependent reduction of N-acetyl-5-glutamyl phosphate to yield N-acetyl-L-glutamate 5-semialdehyde. In Methylacidiphilum infernorum (isolate V4) (Methylokorus infernorum (strain V4)), this protein is N-acetyl-gamma-glutamyl-phosphate reductase.